The following is a 1456-amino-acid chain: Putative 1-phosphatidylinositol-3-phosphate 5-kinase FAB1D (1456 aa).

Low complexity predominate over residues 1–19 (MTPSNSLSSSERSLSGECS). 6 disordered regions span residues 1–110 (MTPS…EVDG), 533–592 (PVSV…NDIE), 925–944 (ENDN…TPLV), 967–987 (VPED…TSPI), 1003–1022 (NGQE…DDEV), and 1137–1159 (NNQD…TNRL). The segment covering 43-57 (ELTKEVKVDRLERKS) has biased composition (basic and acidic residues). The segment covering 86–110 (REDDSDDVPVWEPPEPENPEDEVDG) has biased composition (acidic residues). A compositionally biased stretch (low complexity) spans 533-544 (PVSVDTDVSTTS). The segment covering 973–987 (SQTLCSSSPDTTSPI) has biased composition (polar residues). Residues 1115–1443 (NNEESKKPLS…RFRKFMKTHF (329 aa)) form the PIPK domain. Polar residues predominate over residues 1150 to 1159 (RFSSESTNRL).

In terms of assembly, component of the PI(3,5)P2 regulatory complex at least composed of ATG18, SAC/FIG4, FAB1 and VAC14. Requires Mg(2+) as cofactor. It depends on Mn(2+) as a cofactor.

It carries out the reaction a 1,2-diacyl-sn-glycero-3-phospho-(1D-myo-inositol-3-phosphate) + ATP = a 1,2-diacyl-sn-glycero-3-phospho-(1D-myo-inositol-3,5-bisphosphate) + ADP + H(+). Its function is as follows. The PI(3,5)P2 regulatory complex regulates both the synthesis and turnover of phosphatidylinositol 3,5-bisphosphate (PtdIns(3,5)P2). Catalyzes the phosphorylation of phosphatidylinositol 3-phosphate on the fifth hydroxyl of the myo-inositol ring, to form phosphatidylinositol 3,5-bisphosphate. The polypeptide is Putative 1-phosphatidylinositol-3-phosphate 5-kinase FAB1D (FAB1D) (Arabidopsis thaliana (Mouse-ear cress)).